The sequence spans 448 residues: Histidine--tRNA ligase (448 aa).

Disordered regions lie at residues 1-20 (MAIKRPKGTQDHLPDGSPKL) and 428-448 (AGQADQHSPAIPHDPTPQEKA).

It belongs to the class-II aminoacyl-tRNA synthetase family. In terms of assembly, homodimer.

Its subcellular location is the cytoplasm. It carries out the reaction tRNA(His) + L-histidine + ATP = L-histidyl-tRNA(His) + AMP + diphosphate + H(+). The protein is Histidine--tRNA ligase of Deinococcus deserti (strain DSM 17065 / CIP 109153 / LMG 22923 / VCD115).